Here is a 420-residue protein sequence, read N- to C-terminus: Dachshund homolog dac-1 (420 aa).

The disordered stretch occupies residues 23-77 (PSSSSSSSNNSSSNTSSSNFLSPYEYQESSTSPRDTTDSSGESSLSSSGSSSSLN). Composition is skewed to low complexity over residues 24 to 41 (SSSS…SSSN) and 51 to 77 (SSTS…SSLN). Residues 85–171 (KLIKFRGHNV…LLKTSDFEKL (87 aa)) form a DACHbox-N region. Over residues 242–258 (NSFERADDDDQNQRDAD) the composition is skewed to basic and acidic residues. The tract at residues 242-321 (NSFERADDDD…SSSSSGKNDE (80 aa)) is disordered. Positions 263–273 (LNLSKSGGNSE) are enriched in polar residues. A compositionally biased stretch (low complexity) spans 297–317 (GGSNSNSLSMSMEAGSSSSSG).

Belongs to the DACH/dachshund family. Expressed in AFD, AWC, ASE and ASK neurons. Expressed in the alae.

Its subcellular location is the nucleus. Functionally, transcription factor. Plays a role in the thermotactic response. This Caenorhabditis elegans protein is Dachshund homolog dac-1.